The primary structure comprises 150 residues: Large ribosomal subunit protein bL9 (150 aa).

This sequence belongs to the bacterial ribosomal protein bL9 family.

In terms of biological role, binds to the 23S rRNA. The chain is Large ribosomal subunit protein bL9 from Verminephrobacter eiseniae (strain EF01-2).